The primary structure comprises 370 residues: 4-hydroxy-3-methylbut-2-en-1-yl diphosphate synthase (flavodoxin) (370 aa).

Positions 270, 273, 305, and 312 each coordinate [4Fe-4S] cluster.

The protein belongs to the IspG family. It depends on [4Fe-4S] cluster as a cofactor.

The enzyme catalyses (2E)-4-hydroxy-3-methylbut-2-enyl diphosphate + oxidized [flavodoxin] + H2O + 2 H(+) = 2-C-methyl-D-erythritol 2,4-cyclic diphosphate + reduced [flavodoxin]. It functions in the pathway isoprenoid biosynthesis; isopentenyl diphosphate biosynthesis via DXP pathway; isopentenyl diphosphate from 1-deoxy-D-xylulose 5-phosphate: step 5/6. Converts 2C-methyl-D-erythritol 2,4-cyclodiphosphate (ME-2,4cPP) into 1-hydroxy-2-methyl-2-(E)-butenyl 4-diphosphate. The chain is 4-hydroxy-3-methylbut-2-en-1-yl diphosphate synthase (flavodoxin) from Azotobacter vinelandii (strain DJ / ATCC BAA-1303).